Consider the following 525-residue polypeptide: CBL-interacting protein kinase 21 (525 aa).

One can recognise a Protein kinase domain in the interval 87-342; that stretch reads YEMGRALGEG…ITGIRAHEWF (256 aa). Residues 93–101 and lysine 116 contribute to the ATP site; that span reads LGEGHFGKV. Aspartate 210 (proton acceptor) is an active-site residue. Residues 228-257 are activation loop; the sequence is DFGLSALPQNQRKDGLLHTTCGSPNYIAPE. The NAF domain occupies 372–401; it reads DIETSPAISQINAFQLIGMSSCLDLSGFFE. Residues 407-436 form a PPI region; it reads ERKIRFVSNYSPTSLFEKIESTVTEKGFQV.

This sequence belongs to the protein kinase superfamily. CAMK Ser/Thr protein kinase family. SNF1 subfamily. Requires Mn(2+) as cofactor.

It catalyses the reaction L-seryl-[protein] + ATP = O-phospho-L-seryl-[protein] + ADP + H(+). It carries out the reaction L-threonyl-[protein] + ATP = O-phospho-L-threonyl-[protein] + ADP + H(+). Functionally, CIPK serine-threonine protein kinases interact with CBL proteins. Binding of a CBL protein to the regulatory NAF domain of CIPK protein lead to the activation of the kinase in a calcium-dependent manner. The protein is CBL-interacting protein kinase 21 (CIPK21) of Oryza sativa subsp. japonica (Rice).